The sequence spans 572 residues: Mitochondrial distribution and morphology protein 34 (572 aa).

In terms of domain architecture, SMP-LTD spans Met1–Leu195. Disordered stretches follow at residues Thr212–Leu236, Gly355–Asp426, His487–Arg507, and Ala552–His572. Basic residues predominate over residues Arg358–Arg370. Positions Val371 to Asp381 are enriched in basic and acidic residues. Residues Ser387–Ser400 show a composition bias toward polar residues.

It belongs to the MDM34 family. In terms of assembly, component of the ER-mitochondria encounter structure (ERMES) or MDM complex, composed of mmm1, mdm10, mdm12 and mdm34.

The protein localises to the mitochondrion outer membrane. Functionally, component of the ERMES/MDM complex, which serves as a molecular tether to connect the endoplasmic reticulum (ER) and mitochondria. Components of this complex are involved in the control of mitochondrial shape and protein biogenesis, and function in nonvesicular lipid trafficking between the ER and mitochondria. Mdm34 is required for the interaction of the ER-resident membrane protein mmm1 and the outer mitochondrial membrane-resident beta-barrel protein mdm10. This chain is Mitochondrial distribution and morphology protein 34, found in Aspergillus fumigatus (strain ATCC MYA-4609 / CBS 101355 / FGSC A1100 / Af293) (Neosartorya fumigata).